The sequence spans 157 residues: Phosphopantetheine adenylyltransferase (157 aa).

The protein belongs to the eukaryotic CoaD family.

The protein resides in the cytoplasm. The catalysed reaction is (R)-4'-phosphopantetheine + ATP + H(+) = 3'-dephospho-CoA + diphosphate. The protein operates within cofactor biosynthesis; coenzyme A biosynthesis. Its function is as follows. Reversibly transfers an adenylyl group from ATP to 4'-phosphopantetheine, yielding dephospho-CoA (dPCoA) and pyrophosphate. The polypeptide is Phosphopantetheine adenylyltransferase (Methanopyrus kandleri (strain AV19 / DSM 6324 / JCM 9639 / NBRC 100938)).